The chain runs to 149 residues: Transcriptional repressor NrdR (149 aa).

Residues 3–34 fold into a zinc finger; that stretch reads CPFCTAEETKVIDSRLAADGYQIRRRRECIGC. The ATP-cone domain occupies 49 to 139; sequence PYIIKNNGNR…VYLSFDDIEE (91 aa).

It belongs to the NrdR family. It depends on Zn(2+) as a cofactor.

Functionally, negatively regulates transcription of bacterial ribonucleotide reductase nrd genes and operons by binding to NrdR-boxes. The protein is Transcriptional repressor NrdR of Haemophilus ducreyi (strain 35000HP / ATCC 700724).